Reading from the N-terminus, the 396-residue chain is Bifunctional enzyme Fae/Hps (396 aa).

The tract at residues 1-161 is formaldehyde-activating enzyme; it reads MYQIGEALIG…YEKDRGVHAI (161 aa). H17 serves as the catalytic Proton donor. D19, L48, K66, T68, and Q83 together coordinate substrate. The tract at residues 162 to 396 is 3-hexulose-6-phosphate synthase; that stretch reads MGYKITRLWD…IDQYRIMTDF (235 aa).

The protein in the N-terminal section; belongs to the formaldehyde-activating enzyme family. In the C-terminal section; belongs to the HPS/KGPDC family. HPS subfamily.

The enzyme catalyses 5,6,7,8-tetrahydromethanopterin + formaldehyde = 5,10-methylenetetrahydromethanopterin + H2O. It catalyses the reaction D-ribulose 5-phosphate + formaldehyde = D-arabino-hex-3-ulose 6-phosphate. The protein operates within carbohydrate biosynthesis; D-ribose 5-phosphate biosynthesis. In terms of biological role, catalyzes the condensation of formaldehyde with tetrahydromethanopterin (H(4)MPT) to 5,10-methylenetetrahydromethanopterin. Catalyzes the reversible formation of ribulose-5-phosphate and formaldehyde from 3-hexulose-6-phosphate. The protein is Bifunctional enzyme Fae/Hps of Methanocella arvoryzae (strain DSM 22066 / NBRC 105507 / MRE50).